The sequence spans 161 residues: Nucleotide-binding protein Bcenmc03_2579 (161 aa).

This sequence belongs to the YajQ family.

Functionally, nucleotide-binding protein. The protein is Nucleotide-binding protein Bcenmc03_2579 of Burkholderia orbicola (strain MC0-3).